The chain runs to 595 residues: DNA primase (595 aa).

The segment at 38–62 (CPFHQEKTPSFTVSNSKRFFYCFGC) adopts a CHC2-type zinc-finger fold. Residues 250–332 (NHSILVEGYF…EKKISFIRLP (83 aa)) enclose the Toprim domain. Mg(2+) contacts are provided by Glu-256, Asp-300, and Asp-302.

It belongs to the DnaG primase family. In terms of assembly, monomer. Interacts with DnaB. Requires Zn(2+) as cofactor. It depends on Mg(2+) as a cofactor.

It carries out the reaction ssDNA + n NTP = ssDNA/pppN(pN)n-1 hybrid + (n-1) diphosphate.. Functionally, RNA polymerase that catalyzes the synthesis of short RNA molecules used as primers for DNA polymerase during DNA replication. This chain is DNA primase, found in Rickettsia conorii (strain ATCC VR-613 / Malish 7).